The chain runs to 344 residues: Heat-inducible transcription repressor HrcA (344 aa).

The protein belongs to the HrcA family.

Its function is as follows. Negative regulator of class I heat shock genes (grpE-dnaK-dnaJ and groELS operons). Prevents heat-shock induction of these operons. In Streptococcus pneumoniae (strain P1031), this protein is Heat-inducible transcription repressor HrcA.